A 249-amino-acid polypeptide reads, in one-letter code: Homeobox-leucine zipper protein HOX6 (249 aa).

The tract at residues M1–K32 is disordered. The segment covering G15 to A27 has biased composition (gly residues). The segment at residues A27 to Q86 is a DNA-binding region (homeobox). A leucine-zipper region spans residues K85–P129. The interval F194–E249 is disordered. Residues F212–P242 show a composition bias toward polar residues.

Belongs to the HD-ZIP homeobox family. Class I subfamily. As to expression, expressed in seedlings, roots, leaves, nodes, internodes, flowers and embryo.

It is found in the nucleus. In terms of biological role, probable transcription factor that binds to the DNA sequence 5'-CAAT[AT]ATTG-3'. This is Homeobox-leucine zipper protein HOX6 (HOX6) from Oryza sativa subsp. indica (Rice).